Here is a 437-residue protein sequence, read N- to C-terminus: GTPase Era, mitochondrial (437 aa).

Residues 1 to 43 (MAASSWRGAVLLRTVSGLWQAGPDAAREWMTRLPSLLGFQQRC) constitute a mitochondrion transit peptide. The 219-residue stretch at 112–330 (RVLRVVLLGA…QYLLAQARPG (219 aa)) folds into the Era-type G domain. Residues 120–127 (GAPNAGKS) form a G1 region. Position 120–127 (120–127 (GAPNAGKS)) interacts with GTP. The segment at 146–150 (HTTRS) is G2. The tract at residues 167–170 (DTPG) is G3. 167-171 (DTPGL) serves as a coordination point for GTP. Position 173 is a phosphoserine (S173). 236–239 (NKVD) is a GTP binding site. The G4 stretch occupies residues 236-239 (NKVD). Residues 264-296 (LKTKQALRSRPDTHCPSPAAQGPNPQPVRDPQQ) are disordered. A G5 region spans residues 308 to 310 (LSA). The region spanning 360–437 (LPEEVPYNVQ…QLRLSVKLLK (78 aa)) is the KH type-2 domain.

The protein belongs to the TRAFAC class TrmE-Era-EngA-EngB-Septin-like GTPase superfamily. Era GTPase family.

The protein localises to the mitochondrion matrix. Its subcellular location is the mitochondrion inner membrane. In terms of biological role, probable GTPase that plays a role in the mitochondrial ribosomal small subunit assembly. Specifically binds the 12S mitochondrial rRNA (12S mt-rRNA) to a 33 nucleotide section delineating the 3' terminal stem-loop region. May act as a chaperone that protects the 12S mt-rRNA on the 28S mitoribosomal subunit during ribosomal small subunit assembly. This Bos taurus (Bovine) protein is GTPase Era, mitochondrial (ERAL1).